Here is a 377-residue protein sequence, read N- to C-terminus: Putative FBD-associated F-box protein At5g44940 (377 aa).

The F-box domain occupies 4–50 (FDYISEFPDCLLTQILLNLPTKDSVKTSVLSKRWRNLWLNVPGLRLR). Positions 297-346 (IDFHKVPQCLISTLEYVQIEELILKEKSGIKLVDYFLENSAVLKKLTLSF) constitute an FBD domain.

This Arabidopsis thaliana (Mouse-ear cress) protein is Putative FBD-associated F-box protein At5g44940.